The sequence spans 123 residues: Large ribosomal subunit protein bL12 (123 aa).

The protein belongs to the bacterial ribosomal protein bL12 family. As to quaternary structure, homodimer. Part of the ribosomal stalk of the 50S ribosomal subunit. Forms a multimeric L10(L12)X complex, where L10 forms an elongated spine to which 2 to 4 L12 dimers bind in a sequential fashion. Binds GTP-bound translation factors.

In terms of biological role, forms part of the ribosomal stalk which helps the ribosome interact with GTP-bound translation factors. Is thus essential for accurate translation. This is Large ribosomal subunit protein bL12 from Acinetobacter baumannii (strain AB307-0294).